Reading from the N-terminus, the 345-residue chain is Phosphate acyltransferase (345 aa).

It belongs to the PlsX family. As to quaternary structure, homodimer. Probably interacts with PlsY.

It localises to the cytoplasm. The enzyme catalyses a fatty acyl-[ACP] + phosphate = an acyl phosphate + holo-[ACP]. It participates in lipid metabolism; phospholipid metabolism. Catalyzes the reversible formation of acyl-phosphate (acyl-PO(4)) from acyl-[acyl-carrier-protein] (acyl-ACP). This enzyme utilizes acyl-ACP as fatty acyl donor, but not acyl-CoA. The protein is Phosphate acyltransferase of Wolbachia sp. subsp. Drosophila simulans (strain wRi).